Here is a 341-residue protein sequence, read N- to C-terminus: Ketol-acid reductoisomerase (NADP(+)) (341 aa).

The 182-residue stretch at 1–182 (MTEMFYDDDA…GGTRAGVIKT (182 aa)) folds into the KARI N-terminal Rossmann domain. NADP(+)-binding positions include 25 to 28 (YGSQ), Lys48, Ser51, Ser53, and 83 to 86 (DQHQ). Residue His108 is part of the active site. Gly134 lines the NADP(+) pocket. The KARI C-terminal knotted domain occupies 183-328 (TFTEETETDL…RELRSLFSWQ (146 aa)). Mg(2+) contacts are provided by Asp191, Glu195, Glu227, and Glu231. Ser252 provides a ligand contact to substrate.

This sequence belongs to the ketol-acid reductoisomerase family. Mg(2+) serves as cofactor.

The catalysed reaction is (2R)-2,3-dihydroxy-3-methylbutanoate + NADP(+) = (2S)-2-acetolactate + NADPH + H(+). The enzyme catalyses (2R,3R)-2,3-dihydroxy-3-methylpentanoate + NADP(+) = (S)-2-ethyl-2-hydroxy-3-oxobutanoate + NADPH + H(+). It participates in amino-acid biosynthesis; L-isoleucine biosynthesis; L-isoleucine from 2-oxobutanoate: step 2/4. The protein operates within amino-acid biosynthesis; L-valine biosynthesis; L-valine from pyruvate: step 2/4. Functionally, involved in the biosynthesis of branched-chain amino acids (BCAA). Catalyzes an alkyl-migration followed by a ketol-acid reduction of (S)-2-acetolactate (S2AL) to yield (R)-2,3-dihydroxy-isovalerate. In the isomerase reaction, S2AL is rearranged via a Mg-dependent methyl migration to produce 3-hydroxy-3-methyl-2-ketobutyrate (HMKB). In the reductase reaction, this 2-ketoacid undergoes a metal-dependent reduction by NADPH to yield (R)-2,3-dihydroxy-isovalerate. The sequence is that of Ketol-acid reductoisomerase (NADP(+)) from Pseudarthrobacter chlorophenolicus (strain ATCC 700700 / DSM 12829 / CIP 107037 / JCM 12360 / KCTC 9906 / NCIMB 13794 / A6) (Arthrobacter chlorophenolicus).